Consider the following 356-residue polypeptide: Trans-enoyl reductase pgmF (356 aa).

NADP(+) contacts are provided by residues 57–60 (VDFK), 175–178 (SGGC), 198–201 (STPN), Tyr-216, 261–262 (VG), and 342–343 (AK).

This sequence belongs to the zinc-containing alcohol dehydrogenase family.

In terms of biological role, FAD-linked oxidoreductase; part of the gene cluster that mediates the biosynthesis of pleosporalin A, ascomycone A, as well as a third cryptic naphthoquinone derived pigment, all responsible for the coloration of conidia. The pathway begins with the biosynthesis of the cyclized heptaketide 3-acetonyl-1,6,8-trihydroxy-2-naphthaldehyde by the NR-PKS pgmA. The C-6 hydroxyl group is further methylated by the O-methyltransferase pgmB to yield fusarubinaldehyde which is in turn oxidized by the cytochrome P450 monooxygenase pgmC at C-9. The C-1 hydroxyl group is then methylated spontaneously. Although pgmE, pgmD and pgmH are essential for the production of pleosporalin A, it is not the case for the 2 other final products and it remains difficult to assign a specific function to each enzyme. PgmF and pgmG seem not to be involved in pigment biosynthesis although they were regulated by the cluster-specific transcription factor pgmR. The polypeptide is Trans-enoyl reductase pgmF (Aspergillus terreus).